The primary structure comprises 721 residues: Catalase-peroxidase (721 aa).

The segment at residues 95–223 is a cross-link (tryptophyl-tyrosyl-methioninium (Trp-Tyr) (with M-249)); the sequence is WHSAGSYRLF…LGAVHMGLIY (129 aa). The active-site Proton acceptor is the His-96. The tryptophyl-tyrosyl-methioninium (Tyr-Met) (with W-95) cross-link spans 223–249; that stretch reads YVNPQGRDGKPDPLKSAHDVRVTFKRM. His-264 lines the heme b pocket.

It belongs to the peroxidase family. Peroxidase/catalase subfamily. In terms of assembly, homodimer or homotetramer. The cofactor is heme b. In terms of processing, formation of the three residue Trp-Tyr-Met cross-link is important for the catalase, but not the peroxidase activity of the enzyme.

It catalyses the reaction H2O2 + AH2 = A + 2 H2O. The enzyme catalyses 2 H2O2 = O2 + 2 H2O. In terms of biological role, bifunctional enzyme with both catalase and broad-spectrum peroxidase activity. The chain is Catalase-peroxidase from Parvibaculum lavamentivorans (strain DS-1 / DSM 13023 / NCIMB 13966).